A 508-amino-acid chain; its full sequence is Acetyl-coenzyme A carboxylase carboxyl transferase subunit beta, chloroplastic (508 aa).

Disordered stretches follow at residues 30 to 51 and 173 to 234; these read PIEN…NIQG and NSSN…SSTH. The segment covering 35–47 has biased composition (basic and acidic residues); sequence SESKDPNRNDTDK. The segment covering 173–219 has biased composition (low complexity); the sequence is NSSNNNSSNENSSNENSSNENSSNENSSNDYISSSISSQSENSSQNE. Over residues 220–234 the composition is skewed to polar residues; it reads DITTSDQTIPESSTH. The region spanning 244–508 is the CoA carboxyltransferase N-terminal domain; it reads LWVQCENCYG…LHTFFPLNQN (265 aa). Zn(2+)-binding residues include C248, C251, C267, and C270. The segment at 248-270 adopts a C4-type zinc-finger fold; the sequence is CENCYGLNYKKFFKSKMHLCEQC.

Belongs to the AccD/PCCB family. In terms of assembly, acetyl-CoA carboxylase is a heterohexamer composed of biotin carboxyl carrier protein, biotin carboxylase and 2 subunits each of ACCase subunit alpha and ACCase plastid-coded subunit beta (accD). Requires Zn(2+) as cofactor.

The protein resides in the plastid. Its subcellular location is the chloroplast stroma. The enzyme catalyses N(6)-carboxybiotinyl-L-lysyl-[protein] + acetyl-CoA = N(6)-biotinyl-L-lysyl-[protein] + malonyl-CoA. The protein operates within lipid metabolism; malonyl-CoA biosynthesis; malonyl-CoA from acetyl-CoA: step 1/1. Functionally, component of the acetyl coenzyme A carboxylase (ACC) complex. Biotin carboxylase (BC) catalyzes the carboxylation of biotin on its carrier protein (BCCP) and then the CO(2) group is transferred by the transcarboxylase to acetyl-CoA to form malonyl-CoA. This is Acetyl-coenzyme A carboxylase carboxyl transferase subunit beta, chloroplastic from Lactuca sativa (Garden lettuce).